The sequence spans 350 residues: Biotin synthase (350 aa).

In terms of domain architecture, Radical SAM core spans 41 to 268 (NEVQISRLLS…KSRVRLSAGR (228 aa)). [4Fe-4S] cluster contacts are provided by C56, C60, and C63. The [2Fe-2S] cluster site is built by C100, C131, C191, and R263.

The protein belongs to the radical SAM superfamily. Biotin synthase family. In terms of assembly, homodimer. [4Fe-4S] cluster serves as cofactor. [2Fe-2S] cluster is required as a cofactor.

The enzyme catalyses (4R,5S)-dethiobiotin + (sulfur carrier)-SH + 2 reduced [2Fe-2S]-[ferredoxin] + 2 S-adenosyl-L-methionine = (sulfur carrier)-H + biotin + 2 5'-deoxyadenosine + 2 L-methionine + 2 oxidized [2Fe-2S]-[ferredoxin]. Its pathway is cofactor biosynthesis; biotin biosynthesis; biotin from 7,8-diaminononanoate: step 2/2. In terms of biological role, catalyzes the conversion of dethiobiotin (DTB) to biotin by the insertion of a sulfur atom into dethiobiotin via a radical-based mechanism. The protein is Biotin synthase of Shewanella frigidimarina (strain NCIMB 400).